The sequence spans 335 residues: Holliday junction branch migration complex subunit RuvB (335 aa).

The segment at 4–184 (VDRIVSANAK…FGIVQRLEFY (181 aa)) is large ATPase domain (RuvB-L). ATP-binding positions include isoleucine 23, arginine 24, glycine 65, lysine 68, threonine 69, threonine 70, 131 to 133 (EDY), arginine 174, tyrosine 184, and arginine 221. Position 69 (threonine 69) interacts with Mg(2+). The segment at 185–255 (SVEDLASIVT…IAQEALKMLD (71 aa)) is small ATPAse domain (RuvB-S). The segment at 258–335 (LAGFDFMDRK…RHFGLEQIEK (78 aa)) is head domain (RuvB-H). DNA-binding residues include arginine 294, arginine 313, and arginine 318.

Belongs to the RuvB family. As to quaternary structure, homohexamer. Forms an RuvA(8)-RuvB(12)-Holliday junction (HJ) complex. HJ DNA is sandwiched between 2 RuvA tetramers; dsDNA enters through RuvA and exits via RuvB. An RuvB hexamer assembles on each DNA strand where it exits the tetramer. Each RuvB hexamer is contacted by two RuvA subunits (via domain III) on 2 adjacent RuvB subunits; this complex drives branch migration. In the full resolvosome a probable DNA-RuvA(4)-RuvB(12)-RuvC(2) complex forms which resolves the HJ.

The protein resides in the cytoplasm. The enzyme catalyses ATP + H2O = ADP + phosphate + H(+). Functionally, the RuvA-RuvB-RuvC complex processes Holliday junction (HJ) DNA during genetic recombination and DNA repair, while the RuvA-RuvB complex plays an important role in the rescue of blocked DNA replication forks via replication fork reversal (RFR). RuvA specifically binds to HJ cruciform DNA, conferring on it an open structure. The RuvB hexamer acts as an ATP-dependent pump, pulling dsDNA into and through the RuvAB complex. RuvB forms 2 homohexamers on either side of HJ DNA bound by 1 or 2 RuvA tetramers; 4 subunits per hexamer contact DNA at a time. Coordinated motions by a converter formed by DNA-disengaged RuvB subunits stimulates ATP hydrolysis and nucleotide exchange. Immobilization of the converter enables RuvB to convert the ATP-contained energy into a lever motion, pulling 2 nucleotides of DNA out of the RuvA tetramer per ATP hydrolyzed, thus driving DNA branch migration. The RuvB motors rotate together with the DNA substrate, which together with the progressing nucleotide cycle form the mechanistic basis for DNA recombination by continuous HJ branch migration. Branch migration allows RuvC to scan DNA until it finds its consensus sequence, where it cleaves and resolves cruciform DNA. The protein is Holliday junction branch migration complex subunit RuvB of Histophilus somni (strain 129Pt) (Haemophilus somnus).